A 207-amino-acid chain; its full sequence is Uracil phosphoribosyltransferase (207 aa).

5-phospho-alpha-D-ribose 1-diphosphate-binding positions include Arg-77, Arg-102, and 129–137 (DPMLATGGS). Residues Ile-192 and 197–199 (GDA) each bind uracil. 5-phospho-alpha-D-ribose 1-diphosphate is bound at residue Asp-198.

It belongs to the UPRTase family. Requires Mg(2+) as cofactor.

It carries out the reaction UMP + diphosphate = 5-phospho-alpha-D-ribose 1-diphosphate + uracil. Its pathway is pyrimidine metabolism; UMP biosynthesis via salvage pathway; UMP from uracil: step 1/1. With respect to regulation, allosterically activated by GTP. In terms of biological role, catalyzes the conversion of uracil and 5-phospho-alpha-D-ribose 1-diphosphate (PRPP) to UMP and diphosphate. The protein is Uracil phosphoribosyltransferase of Ureaplasma urealyticum serovar 10 (strain ATCC 33699 / Western).